The sequence spans 128 residues: Spanin, inner membrane subunit (128 aa).

Residues 7–23 form a helical membrane-spanning segment; that stretch reads SLLLAAVFTAVLSGGLW. A coiled-coil region spans residues 24–51; it reads HRLDSTRHDNQTLRRELQTEQQARHTAE.

In terms of assembly, interacts with the spanin outer membrane subunit. Part of the spanin complex which spans the entire periplasmic space. The spanin complex is composed of spanin inner membrane subunit and spanin outer membrane subunit.

The protein localises to the host cell inner membrane. Its function is as follows. Component of the spanin complex that disrupts the host outer membrane and causes cell lysis during virus exit. The spanin complex conducts the final step in host lysis by disrupting the outer membrane after endolysin action has degraded the host peptidoglycans. Host outer membrane disruption is possibly due to local fusion between the inner and outer membrane performed by the spanin complex. The sequence is that of Spanin, inner membrane subunit from Escherichia phage Mu (Bacteriophage Mu).